Reading from the N-terminus, the 250-residue chain is 3-deoxy-manno-octulosonate cytidylyltransferase (250 aa).

This sequence belongs to the KdsB family.

It is found in the cytoplasm. The catalysed reaction is 3-deoxy-alpha-D-manno-oct-2-ulosonate + CTP = CMP-3-deoxy-beta-D-manno-octulosonate + diphosphate. Its pathway is nucleotide-sugar biosynthesis; CMP-3-deoxy-D-manno-octulosonate biosynthesis; CMP-3-deoxy-D-manno-octulosonate from 3-deoxy-D-manno-octulosonate and CTP: step 1/1. The protein operates within bacterial outer membrane biogenesis; lipopolysaccharide biosynthesis. Activates KDO (a required 8-carbon sugar) for incorporation into bacterial lipopolysaccharide in Gram-negative bacteria. The chain is 3-deoxy-manno-octulosonate cytidylyltransferase from Thioalkalivibrio sulfidiphilus (strain HL-EbGR7).